The following is a 323-amino-acid chain: Dehydrogenase/reductase SDR family member 7B (323 aa).

Over 1–17 the chain is Cytoplasmic; the sequence is MISPSFRKGMLKERVMD. The helical; Signal-anchor for type II membrane protein transmembrane segment at 18–38 threads the bilayer; that stretch reads LASQTTILPLLFGCLGIFSLF. The Lumenal segment spans residues 39–323; the sequence is RLLQRIRSKA…ARKERKSKSS (285 aa). Residues Ser62 and Leu64 each coordinate NAD(+). Ser192 provides a ligand contact to substrate. Residues Tyr205, Lys209, and Thr240 each coordinate NAD(+). Residue Tyr205 is the Proton acceptor of the active site.

It belongs to the short-chain dehydrogenases/reductases (SDR) family.

Its subcellular location is the endoplasmic reticulum membrane. Putative oxidoreductase. This chain is Dehydrogenase/reductase SDR family member 7B, found in Mus musculus (Mouse).